A 471-amino-acid polypeptide reads, in one-letter code: Putative multidrug resistance protein MdtD (471 aa).

At Met-1 to Arg-11 the chain is on the periplasmic side. A helical transmembrane segment spans residues Leu-12–Ala-32. The Cytoplasmic portion of the chain corresponds to Leu-33–His-48. Residues Met-49 to Ala-69 traverse the membrane as a helical segment. Residues Asp-70 to Asn-76 are Periplasmic-facing. Residues Ile-77–Thr-97 form a helical membrane-spanning segment. Residues Leu-98–Leu-101 are Cytoplasmic-facing. A helical membrane pass occupies residues Leu-102–Met-124. Residues Lys-125 to Thr-137 are Periplasmic-facing. A helical transmembrane segment spans residues Phe-138–Val-158. Over Glu-159–His-164 the chain is Cytoplasmic. A helical transmembrane segment spans residues Trp-165–Met-185. At Pro-186–Asp-196 the chain is on the periplasmic side. Residues Leu-197 to Ser-217 traverse the membrane as a helical segment. Over Lys-218–Pro-224 the chain is Cytoplasmic. Residues Leu-225–Ala-245 form a helical membrane-spanning segment. Topologically, residues Gln-246–Thr-262 are periplasmic. The helical transmembrane segment at Phe-263–Met-283 threads the bilayer. The Cytoplasmic portion of the chain corresponds to Thr-284 to Pro-285. Residues Val-286–Met-306 traverse the membrane as a helical segment. Over Val-307–Thr-341 the chain is Periplasmic. The helical transmembrane segment at Leu-342 to Leu-362 threads the bilayer. The Cytoplasmic portion of the chain corresponds to Gln-363–Ser-395. Residues Met-396–Phe-416 form a helical membrane-spanning segment. Topologically, residues Gly-417–Thr-430 are periplasmic. Residues Val-431 to Ala-451 form a helical membrane-spanning segment. Topologically, residues Arg-452–Gln-471 are cytoplasmic.

The protein belongs to the major facilitator superfamily. TCR/Tet family.

It localises to the cell inner membrane. This Escherichia coli O6:K15:H31 (strain 536 / UPEC) protein is Putative multidrug resistance protein MdtD.